A 160-amino-acid polypeptide reads, in one-letter code: UPF0262 protein ELI_10965 (160 aa).

Belongs to the UPF0262 family.

In Erythrobacter litoralis (strain HTCC2594), this protein is UPF0262 protein ELI_10965.